A 396-amino-acid polypeptide reads, in one-letter code: S-adenosylmethionine synthase (396 aa).

His16 serves as a coordination point for ATP. Position 18 (Asp18) interacts with Mg(2+). Position 44 (Glu44) interacts with K(+). Glu57 and Gln100 together coordinate L-methionine. The interval 100–110 (QSVDIAQGVDR) is flexible loop. ATP-binding positions include 165 to 167 (DAK), Asp240, 246 to 247 (RK), Ala263, and Lys267. Asp240 lines the L-methionine pocket. Lys271 provides a ligand contact to L-methionine.

It belongs to the AdoMet synthase family. In terms of assembly, homotetramer; dimer of dimers. Requires Mg(2+) as cofactor. It depends on K(+) as a cofactor.

It localises to the cytoplasm. The enzyme catalyses L-methionine + ATP + H2O = S-adenosyl-L-methionine + phosphate + diphosphate. It participates in amino-acid biosynthesis; S-adenosyl-L-methionine biosynthesis; S-adenosyl-L-methionine from L-methionine: step 1/1. Functionally, catalyzes the formation of S-adenosylmethionine (AdoMet) from methionine and ATP. The overall synthetic reaction is composed of two sequential steps, AdoMet formation and the subsequent tripolyphosphate hydrolysis which occurs prior to release of AdoMet from the enzyme. The sequence is that of S-adenosylmethionine synthase from Stutzerimonas stutzeri (strain A1501) (Pseudomonas stutzeri).